A 196-amino-acid polypeptide reads, in one-letter code: Segregation and condensation protein B (196 aa).

The protein belongs to the ScpB family. Homodimer. Homodimerization may be required to stabilize the binding of ScpA to the Smc head domains. Component of a cohesin-like complex composed of ScpA, ScpB and the Smc homodimer, in which ScpA and ScpB bind to the head domain of Smc. The presence of the three proteins is required for the association of the complex with DNA.

It localises to the cytoplasm. In terms of biological role, participates in chromosomal partition during cell division. May act via the formation of a condensin-like complex containing Smc and ScpA that pull DNA away from mid-cell into both cell halves. This chain is Segregation and condensation protein B, found in Pediococcus pentosaceus (strain ATCC 25745 / CCUG 21536 / LMG 10740 / 183-1w).